The sequence spans 86 residues: Insulin-related peptide 2 (86 aa).

Residues 1–19 (MKFYIVFALILACAACVSS) form the signal peptide. Positions 20-43 (QEGTNFYCGRQLSRTLALVCWGAE) are excised as a propeptide. Position 63 is an arginine amide (Arg-63). Positions 67-86 (GPVDECCLKPCSIEEMLTYC) are excised as a propeptide.

This sequence belongs to the insulin family. DAGWWVPPQSARALGGGR-amide: Expressed in corpora cardiaca (CC), corpora allata (CA), antennal lobe (AL) and gnathal ganglion (GNG) (at protein level). Expression in CC and CA detected in most animals, in AL in some animals and in GNG in few animals (at protein level).

The protein resides in the secreted. In Agrotis ipsilon (Black cutworm moth), this protein is Insulin-related peptide 2.